The primary structure comprises 452 residues: Zinc finger protein GAI-ASSOCIATED FACTOR 1 (452 aa).

The segment covering 1–32 (MPVDLDNSSTVSGEASVSISSTGNQNPLPNST) has biased composition (polar residues). The interval 1–47 (MPVDLDNSSTVSGEASVSISSTGNQNPLPNSTGKKKRNLPGMPDPES) is disordered. The residue at position 53 (serine 53) is a Phosphoserine. 2 consecutive C2H2-type zinc fingers follow at residues 63–85 (FVCE…RRGH) and 104–134 (YVCP…CRKH). Positions 126-133 (IKKHFCRK) match the Nuclear localization signal motif. The C2H2-type 2; degenerate zinc finger occupies 139-162 (WKCDKCSKKYAVQSDWKAHSKICG). Zn(2+) is bound by residues cysteine 141, cysteine 144, histidine 157, cysteine 161, cysteine 168, cysteine 170, histidine 183, and cysteine 187. The segment at 166–189 (YKCDCGTLFSRRDSFITHRAFCDA) adopts a CCHC-type 2; atypical zinc-finger fold. Residues 176 to 188 (RRDSFITHRAFCD) are SHR-binding. Positions 196–254 (RSHHSQSKKQNPEILTRKNPVPNPVPAPVDTESAKIKSSSTLTIKQSESPKTPPEIVQE) are disordered. The segment covering 231-245 (IKSSSTLTIKQSESP) has biased composition (polar residues).

As to quaternary structure, interacts with the DELLA proteins (e.g. GAI/RGA2, RGA, RGL1, RGL2 and RGLG3), acting as coactivators and with TPR1 and TPR4, acting as a corepressors, at the promoter of GA20OX2 gene. In terms of tissue distribution, observed in vegetative tissues. Mainly expressed in hypocotyls, petioles, shoot apices, root tips, and trichomes, and, at low levels, in leaves, stems and flowers.

Its subcellular location is the nucleus. Transcription activation is repressed by gibberellic acid GA(3) in the presence of TPR4. Functionally, transcription factor that acts as a positive regulator of gibberellin (GA) action, homeostasis and signaling. GA converts the GAF1 complex from transcriptional activator to repressor via the degradation of DELLA proteins. In Arabidopsis thaliana (Mouse-ear cress), this protein is Zinc finger protein GAI-ASSOCIATED FACTOR 1.